The chain runs to 196 residues: Somatotropin (196 aa).

Residues 1-16 (MDKVILVLLMSLGASS) form the signal peptide. A Pyrrolidone carboxylic acid modification is found at Gln-17. His-35 provides a ligand contact to Zn(2+). Cys-67 and Cys-169 are oxidised to a cystine. Glu-178 is a Zn(2+) binding site. Cysteines 186 and 194 form a disulfide.

Belongs to the somatotropin/prolactin family.

The protein localises to the secreted. Growth hormone plays an important role in growth control and is involved in the regulation of several anabolic processes. Implicated as an osmoregulatory substance important for seawater adaptation. In Takifugu rubripes (Japanese pufferfish), this protein is Somatotropin (gh).